Here is a 481-residue protein sequence, read N- to C-terminus: UDP-N-acetylmuramoylalanine--D-glutamate ligase (481 aa).

108–114 (GTNGKTS) serves as a coordination point for ATP.

This sequence belongs to the MurCDEF family.

It localises to the cytoplasm. The catalysed reaction is UDP-N-acetyl-alpha-D-muramoyl-L-alanine + D-glutamate + ATP = UDP-N-acetyl-alpha-D-muramoyl-L-alanyl-D-glutamate + ADP + phosphate + H(+). It functions in the pathway cell wall biogenesis; peptidoglycan biosynthesis. In terms of biological role, cell wall formation. Catalyzes the addition of glutamate to the nucleotide precursor UDP-N-acetylmuramoyl-L-alanine (UMA). This is UDP-N-acetylmuramoylalanine--D-glutamate ligase from Bifidobacterium longum subsp. infantis (strain ATCC 15697 / DSM 20088 / JCM 1222 / NCTC 11817 / S12).